The chain runs to 118 residues: Large ribosomal subunit protein bL20 (118 aa).

It belongs to the bacterial ribosomal protein bL20 family.

In terms of biological role, binds directly to 23S ribosomal RNA and is necessary for the in vitro assembly process of the 50S ribosomal subunit. It is not involved in the protein synthesizing functions of that subunit. This is Large ribosomal subunit protein bL20 from Azotobacter vinelandii (strain DJ / ATCC BAA-1303).